The chain runs to 434 residues: N-acylneuraminate cytidylyltransferase (434 aa).

Residue M1 is modified to N-acetylmethionine. Residues 1 to 42 (MDSVEKGAATSVSNPRGRPSRGRPPKLQRNSRGGQGRGVEKP) are disordered. The BC1 motif signature appears at 15-31 (PRGRPSRGRPPKLQRNS). An omega-N-methylarginine mark is found at R37 and R52. Substrate contacts are provided by R52, N62, R111, S120, S122, and Q143. The BC2 motif motif lies at 200-206 (KRPRRQD). Residue R201 is part of the active site. Residues 269-276 (KEKLKEIK) carry the BC3 motif motif.

It belongs to the CMP-NeuNAc synthase family. Homotetramer; the active enzyme is formed by a dimer of dimers. Ubiquitously expressed. Expressed in pancreas, kidney, liver, skeletal muscle, lung, placenta, brain, heart, colon, PBL, small intestine, ovary, testis, prostate, thymus and spleen.

It localises to the nucleus. The catalysed reaction is an N-acylneuraminate + CTP = a CMP-N-acyl-beta-neuraminate + diphosphate. The protein operates within amino-sugar metabolism; N-acetylneuraminate metabolism. Functionally, catalyzes the activation of N-acetylneuraminic acid (NeuNAc) to cytidine 5'-monophosphate N-acetylneuraminic acid (CMP-NeuNAc), a substrate required for the addition of sialic acid. Has some activity toward NeuNAc, N-glycolylneuraminic acid (Neu5Gc) or 2-keto-3-deoxy-D-glycero-D-galacto-nononic acid (KDN). In Homo sapiens (Human), this protein is N-acylneuraminate cytidylyltransferase (CMAS).